The sequence spans 720 residues: ABC transporter G family member STR2 (720 aa).

At 1–467 the chain is on the cytoplasmic side; the sequence is MRHANGRRGD…NFINIRRTPE (467 aa). The ABC transporter domain occupies 25–274; the sequence is LEFSNLTYTV…LGRMGRKVPK (250 aa). 70–77 provides a ligand contact to ATP; the sequence is GPSGAGKS. A disordered region spans residues 313-346; that stretch reads GAHEMSIVPPSPAPSHREGRGHDRSNKRLHLKDQ. A compositionally biased stretch (basic and acidic residues) spans 327 to 346; it reads SHREGRGHDRSNKRLHLKDQ. Residues 468-488 traverse the membrane as a helical segment; that stretch reads LFLSRLVVLTVMGIMMATMFM. The Extracellular portion of the chain corresponds to 489 to 502; sequence HPKKNLQGITNRLS. A helical transmembrane segment spans residues 503-523; that stretch reads FFIFTVCLFFFSSNDAVPAFI. The Cytoplasmic portion of the chain corresponds to 524 to 547; it reads QERFIFVRETSHNKYRASSYTIAG. The helical transmembrane segment at 548-568 threads the bilayer; it reads LITYLPFLAVQAAVYAVIVWF. Topologically, residues 569–575 are extracellular; it reads ALSLRGP. Residues 576 to 596 form a helical membrane-spanning segment; sequence FIYFLIVLYMSLLSTNSFVVF. The Cytoplasmic segment spans residues 597 to 604; it reads VSSVVPNY. A helical membrane pass occupies residues 605-625; sequence ILGYAAVIAFTALFFLFCGYF. The Extracellular portion of the chain corresponds to 626–693; it reads LNSHDMPQYW…QVESKKWEKV (68 aa). N-linked (GlcNAc...) asparagine glycosylation is present at Asn-681. A helical transmembrane segment spans residues 694 to 714; it reads YIMLAWAIVYRILFYIVLRFF. Topologically, residues 715 to 720 are cytoplasmic; the sequence is SKNQRT.

This sequence belongs to the ABC transporter superfamily. ABCG family. Stunted arbuscule (STR) subfamily. In terms of assembly, heterodimerizes with STR; the resulting transporter is located in the peri-arbuscular membrane.

The protein localises to the cell membrane. Functionally, together with STR, required for arbuscule development in arbuscular mycorrhizal (AM) symbiosis. This is ABC transporter G family member STR2 from Petunia hybrida (Petunia).